The primary structure comprises 194 residues: NADH-quinone oxidoreductase subunit B (194 aa).

The segment at 1–26 (MGLTPSATKPEIAQAPQGIVDPSTGR) is disordered. The [4Fe-4S] cluster site is built by Cys-73, Cys-74, Cys-138, and Cys-168.

Belongs to the complex I 20 kDa subunit family. As to quaternary structure, NDH-1 is composed of 14 different subunits. Subunits NuoB, C, D, E, F, and G constitute the peripheral sector of the complex. [4Fe-4S] cluster serves as cofactor.

The protein localises to the cell inner membrane. It catalyses the reaction a quinone + NADH + 5 H(+)(in) = a quinol + NAD(+) + 4 H(+)(out). NDH-1 shuttles electrons from NADH, via FMN and iron-sulfur (Fe-S) centers, to quinones in the respiratory chain. The immediate electron acceptor for the enzyme in this species is believed to be ubiquinone. Couples the redox reaction to proton translocation (for every two electrons transferred, four hydrogen ions are translocated across the cytoplasmic membrane), and thus conserves the redox energy in a proton gradient. The sequence is that of NADH-quinone oxidoreductase subunit B from Xanthobacter autotrophicus (strain ATCC BAA-1158 / Py2).